We begin with the raw amino-acid sequence, 245 residues long: Ubiquinone/menaquinone biosynthesis C-methyltransferase UbiE (245 aa).

Residues T71, D92, and 118-119 (DA) contribute to the S-adenosyl-L-methionine site.

Belongs to the class I-like SAM-binding methyltransferase superfamily. MenG/UbiE family.

The catalysed reaction is a 2-demethylmenaquinol + S-adenosyl-L-methionine = a menaquinol + S-adenosyl-L-homocysteine + H(+). It catalyses the reaction a 2-methoxy-6-(all-trans-polyprenyl)benzene-1,4-diol + S-adenosyl-L-methionine = a 5-methoxy-2-methyl-3-(all-trans-polyprenyl)benzene-1,4-diol + S-adenosyl-L-homocysteine + H(+). It functions in the pathway quinol/quinone metabolism; menaquinone biosynthesis; menaquinol from 1,4-dihydroxy-2-naphthoate: step 2/2. It participates in cofactor biosynthesis; ubiquinone biosynthesis. In terms of biological role, methyltransferase required for the conversion of demethylmenaquinol (DMKH2) to menaquinol (MKH2) and the conversion of 2-polyprenyl-6-methoxy-1,4-benzoquinol (DDMQH2) to 2-polyprenyl-3-methyl-6-methoxy-1,4-benzoquinol (DMQH2). The polypeptide is Ubiquinone/menaquinone biosynthesis C-methyltransferase UbiE (Neisseria meningitidis serogroup A / serotype 4A (strain DSM 15465 / Z2491)).